We begin with the raw amino-acid sequence, 125 residues long: Small ribosomal subunit protein uS12c (125 aa).

Residues 104 to 125 (ASGVKDRKQGRSKYGGKRPKGD) are disordered. The segment covering 113-125 (GRSKYGGKRPKGD) has biased composition (basic residues).

It belongs to the universal ribosomal protein uS12 family. As to quaternary structure, part of the 30S ribosomal subunit.

It is found in the plastid. It localises to the chloroplast. Functionally, with S4 and S5 plays an important role in translational accuracy. Located at the interface of the 30S and 50S subunits. The sequence is that of Small ribosomal subunit protein uS12c (rps12) from Emiliania huxleyi (Coccolithophore).